Consider the following 375-residue polypeptide: Quinolinate synthase (375 aa).

Histidine 47 and serine 64 together coordinate iminosuccinate. Residue cysteine 110 participates in [4Fe-4S] cluster binding. Iminosuccinate contacts are provided by residues 144–146 (YVN) and serine 165. Cysteine 235 lines the [4Fe-4S] cluster pocket. Residues 261–263 (HPE) and threonine 278 contribute to the iminosuccinate site. Residue cysteine 325 participates in [4Fe-4S] cluster binding.

The protein belongs to the quinolinate synthase family. Type 3 subfamily. It depends on [4Fe-4S] cluster as a cofactor.

It is found in the cytoplasm. The catalysed reaction is iminosuccinate + dihydroxyacetone phosphate = quinolinate + phosphate + 2 H2O + H(+). It functions in the pathway cofactor biosynthesis; NAD(+) biosynthesis; quinolinate from iminoaspartate: step 1/1. In terms of biological role, catalyzes the condensation of iminoaspartate with dihydroxyacetone phosphate to form quinolinate. The sequence is that of Quinolinate synthase from Herpetosiphon aurantiacus (strain ATCC 23779 / DSM 785 / 114-95).